Reading from the N-terminus, the 316-residue chain is Tetrahydromethanopterin S-methyltransferase subunit H (316 aa).

Belongs to the MtrH family. As to quaternary structure, the complex is composed of 8 subunits; MtrA, MtrB, MtrC, MtrD, MtrE, MtrF, MtrG and MtrH.

It carries out the reaction 5-methyl-5,6,7,8-tetrahydromethanopterin + coenzyme M + 2 Na(+)(in) = 5,6,7,8-tetrahydromethanopterin + methyl-coenzyme M + 2 Na(+)(out). It functions in the pathway one-carbon metabolism; methanogenesis from CO(2); methyl-coenzyme M from 5,10-methylene-5,6,7,8-tetrahydromethanopterin: step 2/2. Functionally, part of a complex that catalyzes the formation of methyl-coenzyme M and tetrahydromethanopterin from coenzyme M and methyl-tetrahydromethanopterin. This is an energy-conserving, sodium-ion translocating step. MtrH catalyzes the transfer of the methyl group from methyl-tetrahydromethanopterin to the corrinoid prosthetic group of MtrA. The protein is Tetrahydromethanopterin S-methyltransferase subunit H of Methanosarcina barkeri (strain Fusaro / DSM 804).